The chain runs to 97 residues: Co-chaperonin GroES (97 aa).

Belongs to the GroES chaperonin family. As to quaternary structure, heptamer of 7 subunits arranged in a ring. Interacts with the chaperonin GroEL.

It localises to the cytoplasm. Functionally, together with the chaperonin GroEL, plays an essential role in assisting protein folding. The GroEL-GroES system forms a nano-cage that allows encapsulation of the non-native substrate proteins and provides a physical environment optimized to promote and accelerate protein folding. GroES binds to the apical surface of the GroEL ring, thereby capping the opening of the GroEL channel. In Aeromonas salmonicida (strain A449), this protein is Co-chaperonin GroES.